The chain runs to 204 residues: Urease accessory protein UreG (204 aa).

GTP is bound at residue 12-19 (GPVGSGKT).

This sequence belongs to the SIMIBI class G3E GTPase family. UreG subfamily. As to quaternary structure, homodimer. UreD, UreF and UreG form a complex that acts as a GTP-hydrolysis-dependent molecular chaperone, activating the urease apoprotein by helping to assemble the nickel containing metallocenter of UreC. The UreE protein probably delivers the nickel.

It localises to the cytoplasm. In terms of biological role, facilitates the functional incorporation of the urease nickel metallocenter. This process requires GTP hydrolysis, probably effectuated by UreG. The polypeptide is Urease accessory protein UreG (Azotobacter vinelandii (strain DJ / ATCC BAA-1303)).